The following is a 215-amino-acid chain: LexA repressor (215 aa).

A DNA-binding region (H-T-H motif) is located at residues 28–48 (RAEIAAELGFSSPNAAEEHLR). Residues Ser-133 and Lys-170 each act as for autocatalytic cleavage activity in the active site.

It belongs to the peptidase S24 family. In terms of assembly, homodimer.

The enzyme catalyses Hydrolysis of Ala-|-Gly bond in repressor LexA.. Its function is as follows. Represses a number of genes involved in the response to DNA damage (SOS response), including recA and lexA. In the presence of single-stranded DNA, RecA interacts with LexA causing an autocatalytic cleavage which disrupts the DNA-binding part of LexA, leading to derepression of the SOS regulon and eventually DNA repair. The chain is LexA repressor from Burkholderia cenocepacia (strain ATCC BAA-245 / DSM 16553 / LMG 16656 / NCTC 13227 / J2315 / CF5610) (Burkholderia cepacia (strain J2315)).